The sequence spans 329 residues: D-alanine--D-alanine ligase (329 aa).

Residues 121–327 (KLWYDALDIP…FSEFLAQCVT (207 aa)) enclose the ATP-grasp domain. Residue 151–206 (AFGHWGSIFVKAARQGSSVGCYKVTTEDQIAPAIEAAFGFSEQVLVEQAVKPRELE) participates in ATP binding. Mg(2+) contacts are provided by D281, E294, and N296.

This sequence belongs to the D-alanine--D-alanine ligase family. It depends on Mg(2+) as a cofactor. Requires Mn(2+) as cofactor.

The protein resides in the cytoplasm. It catalyses the reaction 2 D-alanine + ATP = D-alanyl-D-alanine + ADP + phosphate + H(+). The protein operates within cell wall biogenesis; peptidoglycan biosynthesis. Its function is as follows. Cell wall formation. This Vibrio cholerae serotype O1 (strain ATCC 39541 / Classical Ogawa 395 / O395) protein is D-alanine--D-alanine ligase.